The primary structure comprises 367 residues: uncharacterized protein (367 aa).

The chain crosses the membrane as a helical span at residues 6-26 (IAAGVVVALAAVWCTSAWFTG).

It to E.coli YdgA and YihF.

It is found in the membrane. This is an uncharacterized protein from Haemophilus influenzae (strain ATCC 51907 / DSM 11121 / KW20 / Rd).